The following is a 217-amino-acid chain: 3-demethoxyubiquinol 3-hydroxylase (217 aa).

Glu66, Glu96, His99, Glu148, Glu180, and His183 together coordinate Fe cation.

Belongs to the COQ7 family. Requires Fe cation as cofactor.

The protein resides in the cell membrane. The enzyme catalyses a 5-methoxy-2-methyl-3-(all-trans-polyprenyl)benzene-1,4-diol + AH2 + O2 = a 3-demethylubiquinol + A + H2O. It participates in cofactor biosynthesis; ubiquinone biosynthesis. Its function is as follows. Catalyzes the hydroxylation of 2-nonaprenyl-3-methyl-6-methoxy-1,4-benzoquinol during ubiquinone biosynthesis. The polypeptide is 3-demethoxyubiquinol 3-hydroxylase (Ralstonia pickettii (strain 12J)).